The sequence spans 207 residues: Ras-related protein Rab-8A (207 aa).

GTP is bound by residues Ser17, Gly18, Val19, Gly20, Lys21, Thr22, Cys23, Ser35, Ser39, and Thr40. Mg(2+) is bound at residue Thr22. 2 short sequence motifs (switch) span residues 31–45 (DAFN…GIDF) and 63–80 (DTAG…YYRG). 2 residues coordinate Mg(2+): Thr40 and Asp63. Residue Gly66 coordinates GTP. The residue at position 72 (Thr72) is a Phosphothreonine. 5 residues coordinate GTP: Asn121, Lys122, Asp124, Ala152, and Lys153. Phosphoserine occurs at positions 181 and 185. The residue at position 204 (Cys204) is a Cysteine methyl ester. Cys204 carries S-geranylgeranyl cysteine lipidation. The propeptide at 205-207 (VLL) is removed in mature form.

It belongs to the small GTPase superfamily. Rab family. Interacts (GTP-bound form) with MICALL1; regulates RAB8A association with recycling endosomes. Interacts with MICALL2; competes with RAB13 and is involved in E-cadherin endocytic recycling. Interacts (GTP-bound form) with MICAL1, MICALCL, MICAL3, EHBP1 and EHBP1L1; at least in case of MICAL1, MICALCL, MICAL3 and EHBP1L1 two molecules of RAB8A can bind to one molecule of the effector protein; ternary complexes of RAB8A, RAB13 and either MICAL1 or EHBP1L1 are possible. Interacts with EHD1. Interacts with MAP4K2 and SYTL4. Interacts with SGSM1 and SGSM3. Interacts with RABIF, RIMS2, RPH3A and RPH3A. Interacts with OPTN. Interacts with RAB3IP, RAB3IP functions as guanine exchange factor (GEF). Interacts with MYO5B. Interacts with CIMAP3. Interacts with BIRC6/bruce. Interacts with OCRL. Interacts with AHI1. Interacts with DCDC1. Interacts with LRRK2; interaction facilitates phosphorylation of Thr-72. Interacts with RAB31P, GDI1, GDI2, CHM, CHML, RABGGTA, RABGGTB, TBC1D15 and INPP5B; these interactions are dependent on Thr-72 not being phosphorylated. Interacts with RILPL1 and RILPL2; these interactions are dependent on the phosphorylation of Thr-72 by LRRK2. Interacts with DZIP1; prevents inhibition by the GDP-dissociation inhibitor GDI2. Interacts (in GDP-bound form) with RAB3IP/Rabin8, RAB3IP functions as guanine exchange factor (GEF) towards RAB8A. Interacts (in GDP-bound form) with RPGR, RPGR functions as GEF towards RAB8A. It depends on Mg(2+) as a cofactor. In terms of processing, phosphorylation of Thr-72 in the switch II region by LRRK2 prevents the association of RAB regulatory proteins, including CHM, CHML and RAB GDP dissociation inhibitors GDI1 and GDI2. Phosphorylation by LRRK2 is required for localization to stressed lysosomes.

The protein localises to the cell membrane. It is found in the golgi apparatus. It localises to the endosome membrane. Its subcellular location is the recycling endosome membrane. The protein resides in the cell projection. The protein localises to the cilium. It is found in the cytoplasmic vesicle. It localises to the phagosome membrane. Its subcellular location is the cytoplasm. The protein resides in the cytoskeleton. The protein localises to the microtubule organizing center. It is found in the centrosome. It localises to the centriole. Its subcellular location is the cilium basal body. The protein resides in the midbody. The protein localises to the lysosome. The enzyme catalyses GTP + H2O = GDP + phosphate + H(+). Regulated by guanine nucleotide exchange factors (GEFs) such as RAB3IP/Rabin8 and RPGR which promote the exchange of bound GDP for free GTP, GTPase activating proteins (GAPs) which increase the GTP hydrolysis activity, and GDP dissociation inhibitors (GDIs) which inhibit the dissociation of the nucleotide from the GTPase. Activated in response to insulin. The small GTPases Rab are key regulators of intracellular membrane trafficking, from the formation of transport vesicles to their fusion with membranes. Rabs cycle between an inactive GDP-bound form and an active GTP-bound form that is able to recruit to membranes different sets of downstream effectors directly responsible for vesicle formation, movement, tethering and fusion. RAB8A is involved in polarized vesicular trafficking and neurotransmitter release. Together with RAB11A, RAB3IP, the exocyst complex, PARD3, PRKCI, ANXA2, CDC42 and DNMBP promotes transcytosis of PODXL to the apical membrane initiation sites (AMIS), apical surface formation and lumenogenesis. Regulates the compacted morphology of the Golgi. Together with MYO5B and RAB11A participates in epithelial cell polarization. Also involved in membrane trafficking to the cilium and ciliogenesis. Together with MICALL2, may also regulate adherens junction assembly. May play a role in insulin-induced transport to the plasma membrane of the glucose transporter GLUT4 and therefore play a role in glucose homeostasis. Involved in autophagy. Participates in the export of a subset of neosynthesized proteins through a Rab8-Rab10-Rab11-dependent endososomal export route. Targeted to and stabilized on stressed lysosomes through LRRK2 phosphorylation. Suppresses stress-induced lysosomal enlargement through EHBP1 and EHNP1L1 effector proteins. The sequence is that of Ras-related protein Rab-8A (RAB8A) from Pongo abelii (Sumatran orangutan).